A 350-amino-acid chain; its full sequence is GDSL esterase/lipase At2g42990 (350 aa).

An N-terminal signal peptide occupies residues Met-1–Ala-24. The active-site Nucleophile is the Ser-35. Residues Asn-98, Asn-117, and Asn-141 are each glycosylated (N-linked (GlcNAc...) asparagine). Active-site residues include Asp-325 and His-328.

This sequence belongs to the 'GDSL' lipolytic enzyme family.

It localises to the secreted. This Arabidopsis thaliana (Mouse-ear cress) protein is GDSL esterase/lipase At2g42990.